The primary structure comprises 562 residues: Dihydroxy-acid dehydratase (562 aa).

Asp78 is a Mg(2+) binding site. Position 119 (Cys119) interacts with [2Fe-2S] cluster. 2 residues coordinate Mg(2+): Asp120 and Lys121. An N6-carboxylysine modification is found at Lys121. Cys192 serves as a coordination point for [2Fe-2S] cluster. Glu450 provides a ligand contact to Mg(2+). Ser476 acts as the Proton acceptor in catalysis.

The protein belongs to the IlvD/Edd family. In terms of assembly, homodimer. The cofactor is [2Fe-2S] cluster. Mg(2+) serves as cofactor.

It catalyses the reaction (2R)-2,3-dihydroxy-3-methylbutanoate = 3-methyl-2-oxobutanoate + H2O. It carries out the reaction (2R,3R)-2,3-dihydroxy-3-methylpentanoate = (S)-3-methyl-2-oxopentanoate + H2O. The protein operates within amino-acid biosynthesis; L-isoleucine biosynthesis; L-isoleucine from 2-oxobutanoate: step 3/4. It functions in the pathway amino-acid biosynthesis; L-valine biosynthesis; L-valine from pyruvate: step 3/4. Functionally, functions in the biosynthesis of branched-chain amino acids. Catalyzes the dehydration of (2R,3R)-2,3-dihydroxy-3-methylpentanoate (2,3-dihydroxy-3-methylvalerate) into 2-oxo-3-methylpentanoate (2-oxo-3-methylvalerate) and of (2R)-2,3-dihydroxy-3-methylbutanoate (2,3-dihydroxyisovalerate) into 2-oxo-3-methylbutanoate (2-oxoisovalerate), the penultimate precursor to L-isoleucine and L-valine, respectively. This Nautilia profundicola (strain ATCC BAA-1463 / DSM 18972 / AmH) protein is Dihydroxy-acid dehydratase.